Consider the following 266-residue polypeptide: 5'-nucleotidase SurE (266 aa).

Positions 8, 9, 39, and 95 each coordinate a divalent metal cation.

The protein belongs to the SurE nucleotidase family. A divalent metal cation is required as a cofactor.

The protein resides in the cytoplasm. It carries out the reaction a ribonucleoside 5'-phosphate + H2O = a ribonucleoside + phosphate. Functionally, nucleotidase that shows phosphatase activity on nucleoside 5'-monophosphates. The protein is 5'-nucleotidase SurE of Syntrophus aciditrophicus (strain SB).